Consider the following 285-residue polypeptide: Bifunctional protein FolD (285 aa).

NADP(+) is bound by residues 165–167 (GRS), S190, and I231.

The protein belongs to the tetrahydrofolate dehydrogenase/cyclohydrolase family. Homodimer.

The catalysed reaction is (6R)-5,10-methylene-5,6,7,8-tetrahydrofolate + NADP(+) = (6R)-5,10-methenyltetrahydrofolate + NADPH. It catalyses the reaction (6R)-5,10-methenyltetrahydrofolate + H2O = (6R)-10-formyltetrahydrofolate + H(+). It participates in one-carbon metabolism; tetrahydrofolate interconversion. Its function is as follows. Catalyzes the oxidation of 5,10-methylenetetrahydrofolate to 5,10-methenyltetrahydrofolate and then the hydrolysis of 5,10-methenyltetrahydrofolate to 10-formyltetrahydrofolate. In Acetivibrio thermocellus (strain ATCC 27405 / DSM 1237 / JCM 9322 / NBRC 103400 / NCIMB 10682 / NRRL B-4536 / VPI 7372) (Clostridium thermocellum), this protein is Bifunctional protein FolD.